The sequence spans 209 residues: MAKVHVFDHPLIQHKLSYIREESTGTKEFRELVDEVGMLMAYEVTRDLELDDVQIKTPVTEMTAKRLSGKKIAVVPILRAGLGMTEGVLKMIPAARVGHIGLYRDPETLQPVEYFAKMPQDIEERDFIVVDPMLATGGSAIEAINSLKKRGAVKIRFMCLVAAPEGVEALQKAHPDVDIYIAGLDEKLNDHGYIVPGLGDAGDRLFGTK.

Residues Arg-79, Arg-104, and 131 to 139 (DPMLATGGS) each bind 5-phospho-alpha-D-ribose 1-diphosphate. Uracil is bound by residues Ile-194 and 199 to 201 (GDA). Asp-200 contributes to the 5-phospho-alpha-D-ribose 1-diphosphate binding site.

This sequence belongs to the UPRTase family. Mg(2+) is required as a cofactor.

It catalyses the reaction UMP + diphosphate = 5-phospho-alpha-D-ribose 1-diphosphate + uracil. The protein operates within pyrimidine metabolism; UMP biosynthesis via salvage pathway; UMP from uracil: step 1/1. Its activity is regulated as follows. Allosterically activated by GTP. In terms of biological role, catalyzes the conversion of uracil and 5-phospho-alpha-D-ribose 1-diphosphate (PRPP) to UMP and diphosphate. This chain is Uracil phosphoribosyltransferase, found in Macrococcus caseolyticus (strain JCSC5402) (Macrococcoides caseolyticum).